Reading from the N-terminus, the 104-residue chain is Complex III assembly factor LYRM7 (104 aa).

At S60 the chain carries Phosphoserine.

It belongs to the complex I LYR family. Interacts with UQCRFS1.

It localises to the mitochondrion matrix. In terms of biological role, assembly factor required for Rieske Fe-S protein UQCRFS1 incorporation into the cytochrome b-c1 (CIII) complex. Functions as a chaperone, binding to this subunit within the mitochondrial matrix and stabilizing it prior to its translocation and insertion into the late CIII dimeric intermediate within the mitochondrial inner membrane. The polypeptide is Complex III assembly factor LYRM7 (Lyrm7) (Mus musculus (Mouse)).